A 755-amino-acid chain; its full sequence is MLLATDLDGTFLGGDPKDRLSLYQTIAAHPEIRLAYVTGRSLESVLPLLADPTLPQPDFIISDVGASLVHGDSLQPIQPLQSAVDALWPGDSQVASAIERFALERQDVPQVRRCSYFCNPEQAANPELLTIAESLGCDLLYSAERYLDFLPKGVNKGSSLQALIDWLELDNDQVLTAGDTLNDLSMLSGQFKGVCVGASEPGLLQATRQYSLVFHAERAGCGGILEAFVHFGFLGKQGIAAEGKQVAEPGKADLMMVYHRLPYEEFRGADGKLQRRRPTSPNGIIPTLLSFFGDGRAGSWVAWAEHDENSGETFDSHTTVDAERYPKLTAARVALSKEEVDIFYKRFSKEAFWPTLHTFWERGQFREDDWQVFLKVNRAFAERTALEAAEGATVWLHDYNLWMVPGYLRELRPDLRIAFFHHTYFPSADVFNVLPWRRQIIGSLLQCDYIGFHIPRQVENFVDAARGVMPLQTVSRQNCAPRFITYGCAVGLERMTTAVDTGNRVVKLGAHPVGLDIERVRSALAAPKIREMMERLRSELAGVKLILSVERLDYTKGILEKLNAYERLLEENPELLGKVTLVTVCVPAAKEMTIYDELQGQIEQAVGRINGRFARIGWTPLQFFFRSLPFEEVSAWYAMADVMWITPLRDGLNLVAKEFVAAQGLLDGRGVLVLSEFAGAAAELKGALLTNPHDPVDMTQTCYVALNMPKAEAQARLRELFDIVNYNDIRRWGDEFLAAVSDPQEQLDRALGLVG.

This sequence belongs to the glycosyltransferase 20 family.

The enzyme catalyses ADP-alpha-D-glucose + sn-glycerol 3-phosphate = 2-O-(alpha-D-glucopyranosyl)-sn-glycerol 3-phosphate + ADP + H(+). The protein operates within glycan metabolism; glucosylglycerol biosynthesis. Involved in salt tolerance by producing GG-phosphate from ADP-glucose and glycerol-3-phosphate (G3P), an intermediate in the synthesis of the osmolyte glucosylglycerol (GG). The protein is Glucosylglycerol-phosphate synthase (ggpS) of Pseudomonas anguilliseptica.